The chain runs to 321 residues: Digestive cysteine proteinase 3 (321 aa).

The signal sequence occupies residues 1–16; it reads MKVAALFLCGLALATA. A propeptide spans 17–106 (activation peptide); sequence SPSWDHFKTQ…AVFTAEAGPM (90 aa). 3 disulfide bridges follow: C127-C170, C161-C203, and C261-C310. C130 is an active-site residue. Catalysis depends on residues H268 and N288.

The protein belongs to the peptidase C1 family.

With respect to regulation, inhibited by E-64, antipain, leupeptin, heavy metal ions, iodoacetic acid, dithionitrobenzene, p-hydroxymercuri-benzoate; activated by mercaptoethanol and dithiothreitol. The protein is Digestive cysteine proteinase 3 (LCP3) of Homarus americanus (American lobster).